Here is a 125-residue protein sequence, read N- to C-terminus: Ribonuclease P protein component (125 aa).

It belongs to the RnpA family. Consists of a catalytic RNA component (M1 or rnpB) and a protein subunit.

It catalyses the reaction Endonucleolytic cleavage of RNA, removing 5'-extranucleotides from tRNA precursor.. Its function is as follows. RNaseP catalyzes the removal of the 5'-leader sequence from pre-tRNA to produce the mature 5'-terminus. It can also cleave other RNA substrates such as 4.5S RNA. The protein component plays an auxiliary but essential role in vivo by binding to the 5'-leader sequence and broadening the substrate specificity of the ribozyme. The polypeptide is Ribonuclease P protein component (Clostridium beijerinckii (strain ATCC 51743 / NCIMB 8052) (Clostridium acetobutylicum)).